Reading from the N-terminus, the 340-residue chain is Maltose epimerase (340 aa).

Residue Arg79 coordinates substrate. Residue His178 is the Proton donor of the active site. Asp247 provides a ligand contact to substrate. Glu305 functions as the Proton acceptor in the catalytic mechanism.

It belongs to the aldose epimerase family.

The enzyme catalyses alpha-maltose = beta-maltose. The protein operates within carbohydrate metabolism; hexose metabolism. Catalyzes the interconversion of alpha and beta anomers of maltose. The polypeptide is Maltose epimerase (Levilactobacillus brevis (strain ATCC 367 / BCRC 12310 / CIP 105137 / JCM 1170 / LMG 11437 / NCIMB 947 / NCTC 947) (Lactobacillus brevis)).